The following is a 317-amino-acid chain: MHNPQLTKDGKLKHLLTTEGLPRAILNQILDTAESFVGVAEREVKKVPLLRGKTVCNIFFENSTRTRTTFEIAAKRLSADVITLNVSTSSQSKGETILDTIDNLTAMHADMFVVRHAESGAAHFIARHVAPHIHVINAGDGRHAHPTQGLLDVFTIRRYKPDMHNLRVAVVGDVLHSRVARSEIHALTTLGVPEVRVIAPKTLLPQHVEKLGVHVYHDMREGLKDIDVVMMLRLQNERMNGSLLPSAQEYFKCYGLTPEKLAFAKPDAIVMHPGPMNRGVEIDSAVADGKQSVILPQVTYGIAVRMAVMSILAGNSE.

Positions 65 and 66 each coordinate carbamoyl phosphate. Lys-93 is an L-aspartate binding site. 3 residues coordinate carbamoyl phosphate: Arg-115, His-145, and Gln-148. L-aspartate contacts are provided by Arg-178 and Arg-233. Gly-274 and Pro-275 together coordinate carbamoyl phosphate.

This sequence belongs to the aspartate/ornithine carbamoyltransferase superfamily. ATCase family. In terms of assembly, heterododecamer (2C3:3R2) of six catalytic PyrB chains organized as two trimers (C3), and six regulatory PyrI chains organized as three dimers (R2).

It catalyses the reaction carbamoyl phosphate + L-aspartate = N-carbamoyl-L-aspartate + phosphate + H(+). It participates in pyrimidine metabolism; UMP biosynthesis via de novo pathway; (S)-dihydroorotate from bicarbonate: step 2/3. In terms of biological role, catalyzes the condensation of carbamoyl phosphate and aspartate to form carbamoyl aspartate and inorganic phosphate, the committed step in the de novo pyrimidine nucleotide biosynthesis pathway. The sequence is that of Aspartate carbamoyltransferase catalytic subunit from Methylobacillus flagellatus (strain ATCC 51484 / DSM 6875 / VKM B-1610 / KT).